We begin with the raw amino-acid sequence, 131 residues long: UPF0102 protein YraN (131 aa).

Belongs to the UPF0102 family.

In Salmonella typhi, this protein is UPF0102 protein YraN.